Consider the following 334-residue polypeptide: Heat shock factor 2-binding protein (334 aa).

Residues 14-51 (MGTKEEFVKVRKKDLERLTTEVMQIRDFLPRILNGEVL) form an interaction with BRME1 region. Positions 49–122 (EVLESFQKLK…LLQQAEYCTE (74 aa)) form a coiled coil. The interaction with BRCA2 stretch occupies residues 83-334 (ARLETVQADN…EDLRTLEHNV (252 aa)).

In terms of assembly, associates with HSF2. The interaction seems to occur between the trimerization domain of HSF2 and the N-terminal hydrophilic region of HSF2BP. Interacts (via C-terminus) with BNC1. Interacts (via N-terminus) with BRCA2 and BRME1; the interactions are direct and allow the formation of a ternary complex. The complex BRME1:HSF2BP:BRCA2 interacts with SPATA22, MEIOB and RAD51. Sumoylated by UBE2I in response to MEKK1-mediated stimuli. As to expression, testis specific. Overexpressed in some tumors.

The protein localises to the cytoplasm. The protein resides in the chromosome. Functionally, meiotic recombination factor component of recombination bridges involved in meiotic double-strand break repair. Modulates the localization of recombinases DMC1:RAD51 to meiotic double-strand break (DSB) sites through the interaction with BRCA2 and its recruitment during meiotic recombination. Indispensable for the DSB repair, homologous synapsis, and crossover formation that are needed for progression past metaphase I, is essential for spermatogenesis and male fertility. Required for proper recombinase recruitment in female meiosis. Inhibits BNC1 transcriptional activity during spermatogenesis, probably by sequestering it in the cytoplasm. May be involved in modulating HSF2 activation in testis. The protein is Heat shock factor 2-binding protein of Homo sapiens (Human).